Reading from the N-terminus, the 284-residue chain is MDAIKKKMQAMKIEKDTALDRADAAKEKVRQMTDKLERIEEELRDTQKKMMQTENDLNKAQEDLAVANTNLEDKEKKVQKAEAEVPPLNRRMTLLEEELERAEERLKIATDKLEKATHTADESDRVRKVMENRSFQDEERANTVESQLKEAQLLAEEADRKYDEVARKLAMVEADLERAEERAEAGENKIVELEEELRVVGNNLKFLEVSEEKALQREDSYEEQIRTVSARLKEAETRAEFAERSVQKLQKEVDRLEDELVHEKGRYKNISEELDQTFQELFGY.

Positions 1-284 form a coiled coil; the sequence is MDAIKKKMQA…DQTFQELFGY (284 aa). Residues 113 to 142 are compositionally biased toward basic and acidic residues; that stretch reads LEKATHTADESDRVRKVMENRSFQDEERAN. Residues 113-143 are disordered; it reads LEKATHTADESDRVRKVMENRSFQDEERANT.

Belongs to the tropomyosin family.

Its function is as follows. Tropomyosin, in association with the troponin complex, plays a central role in the calcium dependent regulation of muscle contraction. The polypeptide is Tropomyosin (Acanthocheilonema viteae (Filarial nematode worm)).